The primary structure comprises 328 residues: MGTAMTYAVIAGSGSFLPERVVSNDELAAELATRNISTSDEWIVERTGIRQRHLAERGVTTSFLATEAARRALADAGVSAAEVDLIIVATSTPDYVFPSTACLVQANLGAKGGAAFDVQAVCSGFVYALSTADAFVRAGRARCALVIGAEVFSRILDWNDRSTCVLFGDGAGAVVLKAGSKPGILAAQLHADGSQTKILCAAGNVAYGDVTGDPFLRMDGQAVFKQAVTVLDRSARDVCAEAGVELAELDWLVPHQANVRILNFLARKLQVPTEKVVITVDSHANTSAASVPLALDAARRDGRIKPGQLVLMQGVGGGFTWGSVLARM.

Catalysis depends on residues cysteine 122 and histidine 255. The tract at residues 256-260 is ACP-binding; it reads QANVR. Asparagine 285 is an active-site residue.

It belongs to the thiolase-like superfamily. FabH family. In terms of assembly, homodimer.

The protein localises to the cytoplasm. The catalysed reaction is malonyl-[ACP] + acetyl-CoA + H(+) = 3-oxobutanoyl-[ACP] + CO2 + CoA. Its pathway is lipid metabolism; fatty acid biosynthesis. Catalyzes the condensation reaction of fatty acid synthesis by the addition to an acyl acceptor of two carbons from malonyl-ACP. Catalyzes the first condensation reaction which initiates fatty acid synthesis and may therefore play a role in governing the total rate of fatty acid production. Possesses both acetoacetyl-ACP synthase and acetyl transacylase activities. Its substrate specificity determines the biosynthesis of branched-chain and/or straight-chain of fatty acids. The protein is Beta-ketoacyl-[acyl-carrier-protein] synthase III of Bordetella petrii (strain ATCC BAA-461 / DSM 12804 / CCUG 43448).